The sequence spans 210 residues: Small ribosomal subunit protein uS4 (210 aa).

Positions 99-161 (RRLDSVIYRM…SKNNATILSA (63 aa)) constitute an S4 RNA-binding domain.

This sequence belongs to the universal ribosomal protein uS4 family. As to quaternary structure, part of the 30S ribosomal subunit. Contacts protein S5. The interaction surface between S4 and S5 is involved in control of translational fidelity.

In terms of biological role, one of the primary rRNA binding proteins, it binds directly to 16S rRNA where it nucleates assembly of the body of the 30S subunit. Functionally, with S5 and S12 plays an important role in translational accuracy. The sequence is that of Small ribosomal subunit protein uS4 from Solibacter usitatus (strain Ellin6076).